Consider the following 715-residue polypeptide: Methionine--tRNA ligase (715 aa).

The short motif at proline 17–histidine 27 is the 'HIGH' region element. Zn(2+)-binding residues include cysteine 148, cysteine 151, cysteine 161, and cysteine 164. The 'KMSKS' region motif lies at lysine 359 to serine 363. Lysine 362 contacts ATP. The region spanning aspartate 614–lysine 715 is the tRNA-binding domain.

It belongs to the class-I aminoacyl-tRNA synthetase family. MetG type 1 subfamily. Homodimer. The cofactor is Zn(2+).

Its subcellular location is the cytoplasm. It carries out the reaction tRNA(Met) + L-methionine + ATP = L-methionyl-tRNA(Met) + AMP + diphosphate. Functionally, is required not only for elongation of protein synthesis but also for the initiation of all mRNA translation through initiator tRNA(fMet) aminoacylation. This Leptospira interrogans serogroup Icterohaemorrhagiae serovar Lai (strain 56601) protein is Methionine--tRNA ligase.